We begin with the raw amino-acid sequence, 282 residues long: ADP-ribosyl cyclase/cyclic ADP-ribose hydrolase (282 aa).

Positions 1 to 24 (MSPVAIVACVCLAVTLTRISPSEA) are cleaved as a signal peptide. 5 cysteine pairs are disulfide-bonded: cysteine 39-cysteine 58, cysteine 75-cysteine 155, cysteine 136-cysteine 149, cysteine 230-cysteine 251, and cysteine 263-cysteine 272.

Belongs to the ADP-ribosyl cyclase family. Ovotestis.

It localises to the cytoplasmic vesicle. It carries out the reaction NAD(+) = cyclic ADP-beta-D-ribose + nicotinamide + H(+). The enzyme catalyses NAD(+) + H2O = ADP-D-ribose + nicotinamide + H(+). It catalyses the reaction nicotinate + NADP(+) = nicotinate-adenine dinucleotide phosphate + nicotinamide. Its activity is regulated as follows. Activity is presumably regulated by its sequestration in vesicles before egg fertilization. After fertilization and upon NADase release, it could then be regulated via its potential phosphorylation sites. In terms of biological role, synthesizes cyclic ADP-ribose (cADPR), a second messenger for calcium mobilization from endoplasmic reticulum. Might make the Ca(2+) mobilizer nicotinate-adenine dinucleotide phosphate. Does not have cADPR hydrolase activity. The sequence is that of ADP-ribosyl cyclase/cyclic ADP-ribose hydrolase from Aplysia kurodai (Kuroda's sea hare).